The sequence spans 123 residues: U7 snRNA-associated Sm-like protein LSm10 (123 aa).

Residues 16-88 (SLIILLQGLQ…VRYVHIPDDV (73 aa)) form the Sm domain.

It belongs to the snRNP Sm proteins family. Component of the heptameric ring U7 snRNP complex, or U7 Sm protein core complex, at least composed of LSM10, LSM11, SNRPB, SNRPD3, SNRPE, SNRPF, SNRPG and U7 snRNA. Formation of the U7 snRNP is an ATP-dependent process mediated by a specialized SMN complex containing at least the Sm protein core complex and additionally, the U7-specific LSM10 and LSM11 proteins. Interacts with CLNS1A and SMN. In terms of processing, not methylated. Methylation is not necessary for interaction with SMN.

The protein resides in the nucleus. Appears to function in the U7 snRNP complex that is involved in histone 3'-end processing. Increases U7 snRNA levels but not histone 3'-end pre-mRNA processing activity, when overexpressed. Required for cell cycle progression from G1 to S phases. Binds specifically to U7 snRNA. Binds to the downstream cleavage product (DCP) of histone pre-mRNA in a U7 snRNP dependent manner. The sequence is that of U7 snRNA-associated Sm-like protein LSm10 (LSM10) from Homo sapiens (Human).